The sequence spans 438 residues: Aspartate--tRNA(Asp/Asn) ligase (438 aa).

Residue E176 coordinates L-aspartate. Residues 198 to 201 are aspartate; sequence QLYK. R220 serves as a coordination point for L-aspartate. Residues 220 to 222, 228 to 230, and E361 contribute to the ATP site; these read RAE and RHL. 2 residues coordinate Mg(2+): E361 and S364. 2 residues coordinate L-aspartate: S364 and R368. An ATP-binding site is contributed by 409–412; the sequence is GADR.

Belongs to the class-II aminoacyl-tRNA synthetase family. Type 2 subfamily. Homodimer. Mg(2+) is required as a cofactor.

It is found in the cytoplasm. It carries out the reaction tRNA(Asx) + L-aspartate + ATP = L-aspartyl-tRNA(Asx) + AMP + diphosphate. Its function is as follows. Aspartyl-tRNA synthetase with relaxed tRNA specificity since it is able to aspartylate not only its cognate tRNA(Asp) but also tRNA(Asn). Reaction proceeds in two steps: L-aspartate is first activated by ATP to form Asp-AMP and then transferred to the acceptor end of tRNA(Asp/Asn). This chain is Aspartate--tRNA(Asp/Asn) ligase, found in Methanocaldococcus jannaschii (strain ATCC 43067 / DSM 2661 / JAL-1 / JCM 10045 / NBRC 100440) (Methanococcus jannaschii).